A 746-amino-acid polypeptide reads, in one-letter code: Exostosin-1 (746 aa).

Residues 1–7 are Cytoplasmic-facing; that stretch reads MQAKKRY. A helical; Signal-anchor for type II membrane protein membrane pass occupies residues 8–28; the sequence is FILLSAGSCLALLFYFGGLQF. The Lumenal portion of the chain corresponds to 29-746; sequence RASRSHSRRE…RKKYRDIERL (718 aa). The N-linked (GlcNAc...) asparagine glycan is linked to Asn-89. Intrachain disulfides connect Cys-98–Cys-103 and Cys-109–Cys-152. A protein contacts are provided by Leu-166 and Tyr-203. UDP-binding residues include Lys-267, Lys-269, Tyr-271, and Arg-280. The cysteines at positions 298 and 312 are disulfide-linked. An a protein-binding site is contributed by His-300. UDP-binding residues include Tyr-319 and Tyr-324. The N-linked (GlcNAc...) asparagine glycan is linked to Asn-330. Cystine bridges form between Cys-334-Cys-355 and Cys-652-Cys-704. UDP contacts are provided by Arg-346 and Glu-349.

The protein belongs to the glycosyltransferase 47 family. As to quaternary structure, part of the heparan sulfate polymerase, a dimeric complex composed of EXT1 and EXT2. Could also form homooligomeric complexes. Interacts with NDST1. In terms of processing, N-glycosylated.

The protein resides in the golgi apparatus membrane. The protein localises to the golgi apparatus. It is found in the cis-Golgi network membrane. It localises to the endoplasmic reticulum membrane. The enzyme catalyses 3-O-{alpha-D-GlcNAc-[(1-&gt;4)-beta-D-GlcA-(1-&gt;4)-alpha-D-GlcNAc](n)-(1-&gt;4)-beta-D-GlcA-(1-&gt;3)-beta-D-Gal-(1-&gt;3)-beta-D-Gal-(1-&gt;4)-beta-D-Xyl}-L-seryl-[protein] + UDP-alpha-D-glucuronate = 3-O-{[(1-&gt;4)-beta-D-GlcA-(1-&gt;4)-alpha-D-GlcNAc](n+1)-(1-&gt;4)-beta-D-GlcA-(1-&gt;3)-beta-D-Gal-(1-&gt;3)-beta-D-Gal-(1-&gt;4)-beta-D-Xyl}-L-seryl-[protein] + UDP + H(+). Its pathway is protein modification; protein glycosylation. Functionally, glycosyltransferase forming with EXT2 the heterodimeric heparan sulfate polymerase which catalyzes the elongation of the heparan sulfate glycan backbone. Glycan backbone extension consists in the alternating transfer of (1-&gt;4)-beta-D-GlcA and (1-&gt;4)-alpha-D-GlcNAc residues from their respective UDP-sugar donors. Both EXT1 and EXT2 are required for the full activity of the polymerase since EXT1 bears the N-acetylglucosaminyl-proteoglycan 4-beta-glucuronosyltransferase activity within the complex while EXT2 carries the glucuronosyl-N-acetylglucosaminyl-proteoglycan 4-alpha-N-acetylglucosaminyltransferase activity. Heparan sulfate proteoglycans are ubiquitous components of the extracellular matrix and play an important role in tissue homeostasis and signaling. In Papio anubis (Olive baboon), this protein is Exostosin-1 (EXT1).